Reading from the N-terminus, the 593-residue chain is Glucose-6-phosphate 1-dehydrogenase, chloroplastic (593 aa).

Residues 116-123 (GASGDLAK) and R150 contribute to the NADP(+) site. Cysteines 168 and 176 form a disulfide. Residue K253 coordinates NADP(+). Residues K253, 283-287 (HYLGK), E321, and D340 contribute to the D-glucose 6-phosphate site. The active-site Proton acceptor is the H345. K438 is an NADP(+) binding site. Residues K441 and R446 each contribute to the D-glucose 6-phosphate site. 2 residues coordinate NADP(+): R451 and R480. Residue Q482 coordinates D-glucose 6-phosphate. NADP(+)-binding positions include 488–490 (YLK) and R573.

It belongs to the glucose-6-phosphate dehydrogenase family. In terms of assembly, homodimer.

The protein localises to the plastid. The protein resides in the chloroplast. It carries out the reaction D-glucose 6-phosphate + NADP(+) = 6-phospho-D-glucono-1,5-lactone + NADPH + H(+). The protein operates within carbohydrate degradation; pentose phosphate pathway; D-ribulose 5-phosphate from D-glucose 6-phosphate (oxidative stage): step 1/3. With respect to regulation, regulated by metabolites. Post-translationally inactivated by cysteine-mediated redox modification via the ferredoxin-thioredoxin system in the light and this avoids futile cycles with photosynthetic CO2 fixation. In terms of biological role, catalyzes the rate-limiting step of the oxidative pentose-phosphate pathway, which represents a route for the dissimilation of carbohydrates besides glycolysis. The main function of this enzyme is to provide reducing power (NADPH) and pentose phosphates for fatty acid and nucleic acid synthesis which are involved in membrane synthesis and cell division. In Nicotiana tabacum (Common tobacco), this protein is Glucose-6-phosphate 1-dehydrogenase, chloroplastic.